The chain runs to 463 residues: uncharacterized protein (463 aa).

Positions 9–67 constitute a TRAM domain; sequence VLKKGQRFPLTIKRLGINGEGVGYFKRHVVFVPGALPGEEVVVEVTDVKPRFAEASIRK. C80, C86, C89, and C169 together coordinate [4Fe-4S] cluster. Residues Q293, Y322, D343, and D391 each coordinate S-adenosyl-L-methionine. Catalysis depends on C418, which acts as the Nucleophile.

Belongs to the class I-like SAM-binding methyltransferase superfamily. RNA M5U methyltransferase family.

This is an uncharacterized protein from Halalkalibacterium halodurans (strain ATCC BAA-125 / DSM 18197 / FERM 7344 / JCM 9153 / C-125) (Bacillus halodurans).